A 148-amino-acid chain; its full sequence is Large ribosomal subunit protein bL9 (148 aa).

This sequence belongs to the bacterial ribosomal protein bL9 family.

Binds to the 23S rRNA. This is Large ribosomal subunit protein bL9 from Listeria welshimeri serovar 6b (strain ATCC 35897 / DSM 20650 / CCUG 15529 / CIP 8149 / NCTC 11857 / SLCC 5334 / V8).